The sequence spans 795 residues: Protocadherin beta-5 (795 aa).

The first 30 residues, 1-30, serve as a signal peptide directing secretion; sequence METALAKTPQKRQVMFLAILLLLWEAGSEA. The Extracellular portion of the chain corresponds to 31–689; it reads VRYSIPEETE…AQADSLTVYL (659 aa). Cadherin domains lie at 35 to 133, 138 to 242, 247 to 346, 351 to 450, and 455 to 560; these read IPEE…APEF, MLLK…APEF, YEVQ…APEL, LSSP…APAF, and YTLF…SPFV. Residue Asn169 is glycosylated (N-linked (GlcNAc...) asparagine). Lys296 carries the N6-acetyllysine modification. Asn417 and Asn435 each carry an N-linked (GlcNAc...) asparagine glycan. A glycan (N-linked (GlcNAc...) asparagine) is linked at Asn566. Residues 567 to 670 form the Cadherin 6 domain; sequence GSAPCTELVP…LVDGFSQPYL (104 aa). Residues 690-710 traverse the membrane as a helical segment; the sequence is VVALASVSSLFLFSVLLFVAV. Residues 711-795 are Cytoplasmic-facing; that stretch reads RLCRRSRAAP…AAFRNSFGLN (85 aa).

Its subcellular location is the cell membrane. Its function is as follows. Potential calcium-dependent cell-adhesion protein. May be involved in the establishment and maintenance of specific neuronal connections in the brain. The chain is Protocadherin beta-5 (PCDHB5) from Homo sapiens (Human).